The primary structure comprises 1175 residues: MRNLISLIAWHDSGWNGRVCRNPKENKYCESFGYVIRKRKYEFCVNNPDANLGNSRERACSEAIVFCKGKVQEHNIRFPAIFYVDRKNRNEHEIKMIKKEIEEQLRMINGKYAILYVRENPLSENRVIVGCVKIKEIIDGSKDYIRKKQSPNRVGRGIVFDVENDVIFALPYQELLEYCKNKNKEIEEILKEFNLIFEVGDFERYFKGMSNFISDEVAVQILKKGLEIVEEFNKFREENQDFDKYLTDENIAFRPHVMKKFDEFAENIKKVIAELEGSKYKYPGLPGVLYFLGMEDAYSRYIELWKNEGEKGEEKLYNALIESLENRKENLEFGITKKVIDKFIAQKEEFREFLKNYAVYYELSAFKLEKIKEQYEKEFINLDNIIKNPYILVEDLKENDSFERIIFEELDSWERRRLGDKFNPYSPYRVRALLVEILKRHLSSGNTTISTKDLKDFFEKMDKDIVKITFDEFLRIIEEYKDIISEKVEIVKKEVKNNENKEIIELFTLKEIREYEEIIENTINYLLKSKAPNIDLNPLEIREKLRIKNENKKPAGVDNEEYEKALDMQTEAVVNLLKNRVGILTGPAGTGKTTVIKTIMELMKEVLGLNKIYILTPTGKSAMVVNEKLNNLATAKTIHRYIAEEFKDYFEGDNYFILRLDKITGNDKKEIDALIIDESSMVDIETMGRLLGTIKLDNLKYLIFVGDINQLPPVGAGKPFYDIYNYLEKVNPQSICKLEIVLRADSKKIVELSKLFLDIDKEERIKILNEMFKNKETLGDNEIYRIKENIGGIEKEIITIEVVKDGNIKKSLENAIETILKENNTEDFFDFAVFNDKLQILVPTKTKGEFGSYMINLFIKQESKFIPDKYKNKMLENWFFGDGKVADKVIQIRNNYKKWVYDTERRKWVKEHGVFNGMMGFAYTFKKWNKYQKKYENKTIIRFYYPKIEAYTDEKEMEHAYAITIHKSQGSGFENVILIIPKGLNKFVSKEMLYTAITRAKKRLYVIVEEELKNFLETNISDLARRKTNLLENFNISYLVPYIENRQIITINGEKVRSWQECVLANLFHEVGIEYIYELLSEYLKIGVLPDFKLNIKNRTILWEHYGMLENEKYRKRQKEEKEPIYKQNGFEIIKLSEINENTKLGDKVLIISTSEDLKNNSQVLEKLKTLQQIS.

Position 586–593 (586–593) interacts with ATP; that stretch reads GPAGTGKT.

This is an uncharacterized protein from Methanocaldococcus jannaschii (strain ATCC 43067 / DSM 2661 / JAL-1 / JCM 10045 / NBRC 100440) (Methanococcus jannaschii).